Consider the following 338-residue polypeptide: Anthranilate phosphoribosyltransferase (338 aa).

5-phospho-alpha-D-ribose 1-diphosphate-binding positions include Gly-81, 84-85 (GD), Ser-89, 91-94 (NVST), 109-117 (KHGNRALSS), and Ala-121. Gly-81 lines the anthranilate pocket. Ser-93 provides a ligand contact to Mg(2+). Asn-112 provides a ligand contact to anthranilate. Arg-167 provides a ligand contact to anthranilate. Positions 226 and 227 each coordinate Mg(2+).

Belongs to the anthranilate phosphoribosyltransferase family. Homodimer. The cofactor is Mg(2+).

It carries out the reaction N-(5-phospho-beta-D-ribosyl)anthranilate + diphosphate = 5-phospho-alpha-D-ribose 1-diphosphate + anthranilate. It functions in the pathway amino-acid biosynthesis; L-tryptophan biosynthesis; L-tryptophan from chorismate: step 2/5. Catalyzes the transfer of the phosphoribosyl group of 5-phosphorylribose-1-pyrophosphate (PRPP) to anthranilate to yield N-(5'-phosphoribosyl)-anthranilate (PRA). The chain is Anthranilate phosphoribosyltransferase from Rhodopseudomonas palustris (strain BisB5).